Reading from the N-terminus, the 3432-residue chain is Genome polyprotein (3432 aa).

The interval 2-15 (TKKPGGPGKNRAIN) is interaction with host EXOC1. The Cytoplasmic portion of the chain corresponds to 2–109 (TKKPGGPGKN…RKQNKRGGNE (108 aa)). Positions 37 to 72 (LLDGRGPVRFVLALITFFKFTALAPTKALLGRWKAV) are hydrophobic; homodimerization of capsid protein C. Residues 106-127 (GGNEGSIMWLASLAVVIACAGA) constitute a propeptide, ER anchor for the capsid protein C, removed in mature form by serine protease NS3. Residues 110 to 130 (GSIMWLASLAVVIACAGAMKL) form a helical membrane-spanning segment. Residues 131–253 (SNFQGKLLMT…ATRYLMKTEN (123 aa)) are Extracellular-facing. Asn-142 is a glycosylation site (N-linked (GlcNAc...) asparagine; by host). A helical transmembrane segment spans residues 254 to 274 (WIIRNPGYAFLAAVLGWMLGS). The Cytoplasmic segment spans residues 275–279 (NNGQR). The chain crosses the membrane as a helical span at residues 280 to 294 (VVFTILLLLVAPAYS). Residues 295 to 746 (FNCLGMGNRD…QVFGGAFRTL (452 aa)) are Extracellular-facing. Intrachain disulfides connect Cys-297-Cys-324, Cys-354-Cys-410, Cys-354-Cys-415, Cys-368-Cys-399, Cys-386-Cys-410, and Cys-386-Cys-415. The tract at residues 392–405 (DRGWGNGCGLFGKG) is fusion peptide. The N-linked (GlcNAc...) asparagine; by host glycan is linked to Asn-448. 2 disulfide bridges follow: Cys-484/Cys-581 and Cys-598/Cys-629. A helical transmembrane segment spans residues 747-767 (FGGMSWITQGLMGALLLWMGV). Residues 768-773 (NARDRS) lie on the Cytoplasmic side of the membrane. The chain crosses the membrane as a helical span at residues 774-794 (IALAFLATGGVLVFLATNVHA). Residues 795 to 1219 (DTGCAIDITR…AFAEANSGGD (425 aa)) lie on the Extracellular side of the membrane. Disulfide bonds link Cys-798–Cys-809, Cys-849–Cys-937, Cys-973–Cys-1017, Cys-1074–Cys-1123, Cys-1085–Cys-1106, and Cys-1107–Cys-1110. 2 N-linked (GlcNAc...) asparagine; by host glycosylation sites follow: Asn-924 and Asn-1001. Residues 1220–1240 (VLHLALIAVFKIQPAFLVMNM) traverse the membrane as a helical segment. Topologically, residues 1241–1250 (LSTRWTNQEN) are cytoplasmic. Residues 1251–1271 (VILVLGAAFFQLASVDLQIGV) form a helical membrane-spanning segment. A topological domain (lumenal) is located at residue His-1272. Residues 1273-1293 (GILNAAAIAWMIVRAITFPTT) traverse the membrane as a helical segment. Residues 1294–1309 (SSVTMPVLALLTPGMR) are Cytoplasmic-facing. A helical membrane pass occupies residues 1310 to 1330 (ALYLDTYRIILLVIGICSLLH). At 1331–1341 (ERKKTMAKKKG) the chain is on the lumenal side. The chain crosses the membrane as a helical span at residues 1342 to 1362 (AVLLGLALTSTGWFSPTTIAA). At 1363-1374 (GLMVCNPNKKRG) the chain is on the cytoplasmic side. 2 interaction with human SPCS1 regions span residues 1374–1423 (GWPA…GKAT) and 1458–1505 (FHLI…TKRG). A helical transmembrane segment spans residues 1375 to 1395 (WPATEFLSAVGLMFAIVGGLA). Topologically, residues 1396 to 1398 (ELD) are lumenal. A helical transmembrane segment spans residues 1399–1419 (IESMSIPFMLAGLMAVSYVVS). Over 1420-1476 (GKATDMWLERAADISWEMDAAITGSSRRLDVKLDDDGDFHLIDDPGVPWKVWVLRMS) the chain is Cytoplasmic. The interval 1427 to 1466 (LERAADISWEMDAAITGSSRRLDVKLDDDGDFHLIDDPGV) is interacts with and activates NS3 protease. Residues 1477-1497 (CIGLAALTPWAIVPAAFGYWL) constitute an intramembrane region (helical). Over 1498–2173 (TLKTTKRGGV…RMALEELPDA (676 aa)) the chain is Cytoplasmic. A Peptidase S7 domain is found at 1505–1682 (GGVFWDTPSP…DRQEEPVPEA (178 aa)). Catalysis depends on charge relay system; for serine protease NS3 activity residues His-1555, Asp-1579, and Ser-1639. Residues 1685–1841 (PNMLRKRQMT…DSNAPIHDLQ (157 aa)) enclose the Helicase ATP-binding domain. Residues 1689-1692 (RKRQ) are important for RNA-binding. 1698–1705 (LHPGSGKT) is an ATP binding site. Residues 1789–1792 (DEAH) carry the DEAH box motif. A Helicase C-terminal domain is found at 1852-2017 (GYEWITEYAG…GLVAQLYGPE (166 aa)). Lys-1893 carries the N6-acetyllysine; by host modification. The disordered stretch occupies residues 1950–1972 (NPSPITSASAAQRRGRVGRNPNQ). A regulates the ATPase activity of NS3 helicase region spans residues 2168-2172 (EELPD). The chain crosses the membrane as a helical span at residues 2174–2194 (LETITLIVAITVMTGGFFLLM). Residues 2195 to 2199 (MQRKG) lie on the Lumenal side of the membrane. Positions 2200-2220 (IGKMGLGALVLTLATFFLWAA) form an intramembrane region, helical. A topological domain (lumenal) is located at residue Glu-2221. A helical membrane pass occupies residues 2222-2242 (VPGTKIAGTLLIALLLMVVLI). Residues 2243 to 2257 (PEPEKQRSQTDNQLA) lie on the Cytoplasmic side of the membrane. Residues 2258–2278 (VFLICVLTVVGVVAANEYGML) traverse the membrane as a helical segment. Residues 2279–2311 (EKTKADLKSMFGGKTQASGLTGLPSMALDLRPA) are Lumenal-facing. Positions 2312–2332 (TAWALYGGSTVVLTPLLKHLI) form an intramembrane region, helical. Topologically, residues 2333–2368 (TSEYVTTSLASINSQAGSLFVLPRGVPFTDLDLTVG) are lumenal. The chain crosses the membrane as a helical span at residues 2369-2389 (LVFLGCWGQITLTTFLTAMVL). Topologically, residues 2390–2444 (ATLHYGYMLPGWQAEALRAAQRRTAAGIMKNAVVDGMVATDVPELERTTPLMQKK) are cytoplasmic. The chain crosses the membrane as a helical span at residues 2445-2465 (VGQVLLIGVSVAAFLVNPNVT). At 2466–2469 (TVRE) the chain is on the lumenal side. Residues 2470 to 2490 (AGVLVTAATLTLWDNGASAVW) form a helical membrane-spanning segment. Over 2491-3432 (NSTTATGLCH…DVLIQEDRVI (942 aa)) the chain is Cytoplasmic. Residues 2528-2793 (GRPGGRTLGE…DVNLGSGTRA (266 aa)) enclose the mRNA cap 0-1 NS5-type MT domain. Ser-2583 contacts S-adenosyl-L-methionine. The residue at position 2583 (Ser-2583) is a Phosphoserine. Lys-2588 functions as the For 2'-O-MTase activity in the catalytic mechanism. Positions 2613, 2614, 2631, 2632, 2658, and 2659 each coordinate S-adenosyl-L-methionine. The active-site For 2'-O-MTase activity is Asp-2673. Residue Ile-2674 participates in S-adenosyl-L-methionine binding. Residues Lys-2709 and Glu-2745 each act as for 2'-O-MTase activity in the active site. Residue Tyr-2747 participates in S-adenosyl-L-methionine binding. The Zn(2+) site is built by Glu-2967, His-2971, Cys-2976, and Cys-2979. The region spanning 3057-3209 (GKMYADDTAG…KPLDDRFATA (153 aa)) is the RdRp catalytic domain. The Zn(2+) site is built by His-3244, Cys-3260, and Cys-3379.

In the N-terminal section; belongs to the class I-like SAM-binding methyltransferase superfamily. mRNA cap 0-1 NS5-type methyltransferase family. Homodimer. Interacts (via N-terminus) with host EXOC1 (via C-terminus); this interaction results in EXOC1 degradation through the proteasome degradation pathway. As to quaternary structure, forms heterodimers with envelope protein E in the endoplasmic reticulum and Golgi. In terms of assembly, homodimer; in the endoplasmic reticulum and Golgi. Interacts with protein prM. Interacts with non-structural protein 1. Interacts with host HSPA5. Homodimer; Homohexamer when secreted. Interacts with envelope protein E. NS1 interacts with NS4B. Interacts with host complement protein CFH; this interaction leads to the degradation of C3. As to quaternary structure, interacts (via N-terminus) with serine protease NS3. In terms of assembly, forms a heterodimer with serine protease NS3. May form homooligomers. Interacts with human SPCS1. Forms a heterodimer with NS2B. Interacts with non-structural protein 2A (via N-terminus). Interacts with NS4B. Interacts with unphosphorylated RNA-directed RNA polymerase NS5; this interaction stimulates RNA-directed RNA polymerase NS5 guanylyltransferase activity. Interacts with host ILF2. As to quaternary structure, interacts with serine protease NS3. In terms of assembly, homodimer. Interacts with host STAT2; this interaction inhibits the phosphorylation of the latter, and, when all viral proteins are present (polyprotein), targets STAT2 for degradation. Interacts with serine protease NS3. Mn(2+) is required as a cofactor. The cofactor is Mg(2+). In terms of processing, specific enzymatic cleavages in vivo yield mature proteins. Cleavages in the lumen of endoplasmic reticulum are performed by host signal peptidase, whereas cleavages in the cytoplasmic side are performed by serine protease NS3. Signal cleavage at the 2K-4B site requires a prior NS3 protease-mediated cleavage at the 4A-2K site. Post-translationally, cleaved in post-Golgi vesicles by a host furin, releasing the mature small envelope protein M, and peptide pr. This cleavage is incomplete as up to 30% of viral particles still carry uncleaved prM. N-glycosylated. In terms of processing, N-glycosylated. The excreted form is glycosylated and this is required for efficient secretion of the protein from infected cells. Post-translationally, acetylated by host KAT5. Acetylation modulates NS3 RNA-binding and unwinding activities and plays an important positive role for viral replication. Phosphorylated on serines residues. This phosphorylation may trigger NS5 nuclear localization.

The protein resides in the host endoplasmic reticulum membrane. Its subcellular location is the virion. It localises to the host nucleus. The protein localises to the host cytoplasm. It is found in the host perinuclear region. The protein resides in the secreted. Its subcellular location is the virion membrane. It localises to the host cell surface. The catalysed reaction is Selective hydrolysis of -Xaa-Xaa-|-Yaa- bonds in which each of the Xaa can be either Arg or Lys and Yaa can be either Ser or Ala.. The enzyme catalyses RNA(n) + a ribonucleoside 5'-triphosphate = RNA(n+1) + diphosphate. It catalyses the reaction a ribonucleoside 5'-triphosphate + H2O = a ribonucleoside 5'-diphosphate + phosphate + H(+). It carries out the reaction ATP + H2O = ADP + phosphate + H(+). The catalysed reaction is a 5'-end (5'-triphosphoguanosine)-ribonucleoside in mRNA + S-adenosyl-L-methionine = a 5'-end (N(7)-methyl 5'-triphosphoguanosine)-ribonucleoside in mRNA + S-adenosyl-L-homocysteine. The enzyme catalyses a 5'-end (N(7)-methyl 5'-triphosphoguanosine)-ribonucleoside in mRNA + S-adenosyl-L-methionine = a 5'-end (N(7)-methyl 5'-triphosphoguanosine)-(2'-O-methyl-ribonucleoside) in mRNA + S-adenosyl-L-homocysteine + H(+). Plays a role in virus budding by binding to the cell membrane and gathering the viral RNA into a nucleocapsid that forms the core of a mature virus particle. During virus entry, may induce genome penetration into the host cytoplasm after hemifusion induced by the surface proteins. Can migrate to the cell nucleus where it modulates host functions. Overcomes the anti-viral effects of host EXOC1 by sequestering and degrading the latter through the proteasome degradation pathway. Functionally, inhibits RNA silencing by interfering with host Dicer. In terms of biological role, prevents premature fusion activity of envelope proteins in trans-Golgi by binding to envelope protein E at pH 6.0. After virion release in extracellular space, gets dissociated from E dimers. Its function is as follows. Acts as a chaperone for envelope protein E during intracellular virion assembly by masking and inactivating envelope protein E fusion peptide. prM is the only viral peptide matured by host furin in the trans-Golgi network probably to avoid catastrophic activation of the viral fusion activity in acidic Golgi compartment prior to virion release. prM-E cleavage is inefficient, and many virions are only partially matured. These uncleaved prM would play a role in immune evasion. May play a role in virus budding. Exerts cytotoxic effects by activating a mitochondrial apoptotic pathway through M ectodomain. May display a viroporin activity. Functionally, binds to host cell surface receptor and mediates fusion between viral and cellular membranes. Efficient virus attachment to cell is, at least in part, mediated by host HSPA5. Envelope protein is synthesized in the endoplasmic reticulum in the form of heterodimer with protein prM. They play a role in virion budding in the ER, and the newly formed immature particle is covered with 60 spikes composed of heterodimer between precursor prM and envelope protein E. The virion is transported to the Golgi apparatus where the low pH causes dissociation of PrM-E heterodimers and formation of E homodimers. prM-E cleavage is inefficient, and many virions are only partially matured. These uncleaved prM would play a role in immune evasion. In terms of biological role, involved in immune evasion, pathogenesis and viral replication. Once cleaved off the polyprotein, is targeted to three destinations: the viral replication cycle, the plasma membrane and the extracellular compartment. Essential for viral replication. Required for formation of the replication complex and recruitment of other non-structural proteins to the ER-derived membrane structures. Excreted as a hexameric lipoparticle that plays a role against host immune response. Antagonizing the complement function. Binds to the host macrophages and dendritic cells. Inhibits signal transduction originating from Toll-like receptor 3 (TLR3). Its function is as follows. Component of the viral RNA replication complex that functions in virion assembly and antagonizes the host alpha/beta interferon antiviral response. Required cofactor for the serine protease function of NS3. May have membrane-destabilizing activity and form viroporins. Functionally, displays three enzymatic activities: serine protease, NTPase and RNA helicase. NS3 serine protease, in association with NS2B, performs its autocleavage and cleaves the polyprotein at dibasic sites in the cytoplasm: C-prM, NS2A-NS2B, NS2B-NS3, NS3-NS4A, NS4A-2K and NS4B-NS5. NS3 RNA helicase binds RNA and unwinds dsRNA in the 3' to 5' direction. In terms of biological role, regulates the ATPase activity of the NS3 helicase activity. NS4A allows NS3 helicase to conserve energy during unwinding. Its function is as follows. Functions as a signal peptide for NS4B and is required for the interferon antagonism activity of the latter. Induces the formation of ER-derived membrane vesicles where the viral replication takes place. Inhibits interferon (IFN)-induced host STAT1 phosphorylation and nuclear translocation, thereby preventing the establishment of cellular antiviral state by blocking the IFN-alpha/beta pathway. Inhibits STAT2 translocation in the nucleus after IFN-alpha treatment. Functionally, replicates the viral (+) and (-) RNA genome. Performs the capping of genomes in the cytoplasm. NS5 methylates viral RNA cap at guanine N-7 and ribose 2'-O positions. Besides its role in RNA genome replication, also prevents the establishment of cellular antiviral state by blocking the interferon-alpha/beta (IFN-alpha/beta) signaling pathway. Inhibits host TYK2 and STAT2 phosphorylation, thereby preventing activation of JAK-STAT signaling pathway. This Japanese encephalitis virus (strain SA-14) (JEV) protein is Genome polyprotein.